The sequence spans 393 residues: Cytochrome b (393 aa).

Helical transmembrane passes span 38-58 (FGSL…FLAM), 82-104 (WLLR…LHIF), 119-139 (VWCL…IGYV), and 185-205 (FFSL…LHLA). Heme b contacts are provided by H88 and H102. Heme b contacts are provided by H189 and H203. H208 provides a ligand contact to a ubiquinone. A run of 4 helical transmembrane segments spans residues 231–251 (FYVK…IWIF), 295–315 (VGGV…PFFK), 327–347 (IYQG…WIGC), and 354–373 (FVTI…AITP).

The protein belongs to the cytochrome b family. The main subunits of complex b-c1 are: cytochrome b, cytochrome c1 and the Rieske protein. Requires heme b as cofactor. Post-translationally, first mitochondrial-encoded protein to be shown to have its N-terminal methionine cleaved off.

It localises to the mitochondrion inner membrane. Component of the ubiquinol-cytochrome c reductase complex (complex III or cytochrome b-c1 complex) that is part of the mitochondrial respiratory chain. The b-c1 complex mediates electron transfer from ubiquinol to cytochrome c. Contributes to the generation of a proton gradient across the mitochondrial membrane that is then used for ATP synthesis. The polypeptide is Cytochrome b (MT-CYB) (Solanum tuberosum (Potato)).